A 154-amino-acid polypeptide reads, in one-letter code: MSLATLDISQHPNLPASAQTLFKAKADKKLSFEQIAQHIGRNEVAAAALFYGQAKASPEDIVKLSELLDIPTPLLEEQLSGFPDRGRSVEMPPKEPLIYRLYEIVQNYGYAYKAVLNEKFGDGIMSAISFSTKVEKETDQDGNNWAVITLRGKW.

Catalysis depends on residues R100, E103, and S126.

The protein belongs to the cyanase family.

It catalyses the reaction cyanate + hydrogencarbonate + 3 H(+) = NH4(+) + 2 CO2. In terms of biological role, catalyzes the reaction of cyanate with bicarbonate to produce ammonia and carbon dioxide. This is Cyanate hydratase from Aspergillus terreus (strain NIH 2624 / FGSC A1156).